A 1545-amino-acid chain; its full sequence is Tricalbin-3 (1545 aa).

Residues 1-89 (MTGIKAQVHP…SNPEGKKQSS (89 aa)) form a disordered region. The Cytoplasmic portion of the chain corresponds to 1–206 (MTGIKAQVHP…AYILENFYND (206 aa)). The span at 62 to 80 (TKTSNSVSDVSKGQKTADS) shows a compositional bias: polar residues. A phosphoserine mark is found at S67 and S112. The helical transmembrane segment at 207 to 227 (WYCNIATVLGTCFFSWLFAYI) threads the bilayer. G228 is a topological domain (extracellular). Residues 229–249 (FSWWSMIFIFLGTATVYNAEY) traverse the membrane as a helical segment. The Cytoplasmic segment spans residues 250 to 1545 (TRFNRNIRDD…VPEVPQEYTQ (1296 aa)). The SMP-LTD domain maps to 272–479 (RVESTTWLNS…PPNHLDINVE (208 aa)). Residues 470-596 (PPNHLDINVE…LQNPVLDNQT (127 aa)) form the C2 1 domain. The stretch at 620 to 660 (EDKSEEKAVERAEAKAKGKKEDENEDTTEKEEDENEESSQT) forms a coiled coil. The segment covering 624–641 (EEKAVERAEAKAKGKKED) has biased composition (basic and acidic residues). Residues 624–660 (EEKAVERAEAKAKGKKEDENEDTTEKEEDENEESSQT) form a disordered region. The span at 642–658 (ENEDTTEKEEDENEESS) shows a compositional bias: acidic residues. C2 domains follow at residues 646 to 763 (TTEK…AQEF) and 783 to 897 (MTGA…SGKY). A coiled-coil region spans residues 937–972 (SPEELVNVEKLEKELKEKKKKFEATQEENEQEMEKN). The 116-residue stretch at 1119-1234 (PTSVKLPSSE…EVGKTYNWNL (116 aa)) folds into the C2 4 domain. Positions 1150, 1156, 1204, 1206, and 1212 each coordinate Ca(2+). The segment at 1304-1404 (LLKSLGGNPM…NSRGHSRASS (101 aa)) is disordered. Residues 1318–1328 (SSNGNESNGAK) show a composition bias toward polar residues. Residues 1329-1340 (KSSEKKSFDRRS) show a composition bias toward basic and acidic residues. 3 positions are modified to phosphoserine: S1340, S1342, and S1346. Over residues 1341 to 1351 (PSNLNSTSVTP) the composition is skewed to polar residues. The residue at position 1350 (T1350) is a Phosphothreonine. Residue S1354 is modified to Phosphoserine. Polar residues predominate over residues 1361–1373 (VPNTSYAPVQSAS). A compositionally biased stretch (low complexity) spans 1377–1404 (KPTDNTSSSSNKKDTPSSNSRGHSRASS). Residues 1396–1514 (SRGHSRASSF…QQDGQISVKL (119 aa)) enclose the C2 5 domain. A Phosphoserine modification is found at S1400.

It belongs to the tricalbin family. As to quaternary structure, interacts with TCB2 via its C-terminal domain. Ca(2+) is required as a cofactor.

The protein resides in the cell membrane. Its subcellular location is the endoplasmic reticulum membrane. Functionally, may play a role in membrane trafficking. The polypeptide is Tricalbin-3 (TCB3) (Saccharomyces cerevisiae (strain ATCC 204508 / S288c) (Baker's yeast)).